The primary structure comprises 78 residues: Cytochrome c oxidase subunit 6b-2 (78 aa).

The CHCH domain occupies 22-65; that stretch reads TRHCFTRYIEFHRCTTAKGEESNDCERFAKYYRALCPGEWVDKW. Residues 25 to 35 carry the Cx9C motif motif; it reads CFTRYIEFHRC. Intrachain disulfides connect C25-C57 and C35-C46. The Cx10C motif signature appears at 46 to 57; it reads CERFAKYYRALC.

This sequence belongs to the cytochrome c oxidase subunit 6B (TC 3.D.4.8) family. In terms of tissue distribution, specifically expressed in roots.

It localises to the mitochondrion. This protein is one of the nuclear-coded polypeptide chains of cytochrome c oxidase, the terminal oxidase in mitochondrial electron transport. This protein may be one of the heme-binding subunits of the oxidase. This Arabidopsis thaliana (Mouse-ear cress) protein is Cytochrome c oxidase subunit 6b-2 (COX6B-2).